We begin with the raw amino-acid sequence, 486 residues long: Maintenance of mitochondrial morphology protein 1 (486 aa).

The Lumenal segment spans residues 1-19; sequence MSNDTSAQPAQSSLSFTQG. The chain crosses the membrane as a helical span at residues 20–40; sequence LLVGQLSVVLLIGAFIKFFIF. Residues 41–486 are Cytoplasmic-facing; the sequence is GEASPSSSRS…GSLPDVVPVT (446 aa). 4 disordered regions span residues 45–98, 269–318, 393–412, and 420–486; these read PSSS…RSIL, QTST…AGTT, VRGQEEQQEVGSSGNAGVST, and ARDA…VPVT. Basic residues predominate over residues 51–61; the sequence is QTRRTSPHKRS. Residues 70 to 79 are compositionally biased toward basic and acidic residues; sequence LGSRSLKEKP. Composition is skewed to polar residues over residues 80–96, 269–291, 307–318, and 401–412; these read SSNVLRPVPSSSTNTRS, QTSTHLATSPSNIDPTLQTNDYS, EQATQANNAGTT, and EVGSSGNAGVST. An SMP-LTD domain is found at 125–382; the sequence is QPESLDWFNV…EPRVQVVALP (258 aa). Composition is skewed to basic and acidic residues over residues 429 to 440 and 462 to 473; these read HATRDADMEGLR and DSREQACRDDPF.

It belongs to the MMM1 family. Homodimer. Component of the ER-mitochondria encounter structure (ERMES) or MDM complex, composed of MMM1, MDM10, MDM12 and MDM34. An MMM1 homodimer associates with one molecule of MDM12 on each side in a pairwise head-to-tail manner, and the SMP-LTD domains of MMM1 and MDM12 generate a continuous hydrophobic tunnel for phospholipid trafficking.

It is found in the endoplasmic reticulum membrane. Functionally, component of the ERMES/MDM complex, which serves as a molecular tether to connect the endoplasmic reticulum (ER) and mitochondria. Components of this complex are involved in the control of mitochondrial shape and protein biogenesis, and function in nonvesicular lipid trafficking between the ER and mitochondria. The MDM12-MMM1 subcomplex functions in the major beta-barrel assembly pathway that is responsible for biogenesis of all outer membrane beta-barrel proteins, and acts in a late step after the SAM complex. The MDM10-MDM12-MMM1 subcomplex further acts in the TOM40-specific pathway after the action of the MDM12-MMM1 complex. Essential for establishing and maintaining the structure of mitochondria and maintenance of mtDNA nucleoids. The polypeptide is Maintenance of mitochondrial morphology protein 1 (Coccidioides immitis (strain RS) (Valley fever fungus)).